Consider the following 958-residue polypeptide: Probable transport protein MmpL1 (958 aa).

12 helical membrane-spanning segments follow: residues 19 to 39 (ALSLPIILFWVALTIVVNVVA), 192 to 212 (SLHTITGISIAVIAIMLFIAY), 216 to 236 (SAALIMLLTVGLELLAVRGII), 252 to 272 (VNVLVALTIAASTDYIIFLVG), 295 to 315 (TAHVVLASGLTVAGAMYCLGF), 329 to 349 (AIGLVTVMLASLTLAPAIIAV), 377 to 397 (WPGPVLAATLLIALIGLLALP), 762 to 782 (YDVMIAVVASLCLIFIIMLGI), 791 to 811 (VIVGTVALSLGSAFGLSVLIW), 814 to 834 (ILHMPLHWLVLPMAIIVMLAV), 868 to 888 (VVTIAGLVFAFTMGSMVASDL), and 906 to 927 (TLVVRSYMTPALATLLGRWFWW).

This sequence belongs to the resistance-nodulation-cell division (RND) (TC 2.A.6) family. MmpL subfamily.

The protein localises to the cell membrane. This is Probable transport protein MmpL1 (mmpL1) from Mycobacterium tuberculosis (strain CDC 1551 / Oshkosh).